Consider the following 36-residue polypeptide: Lambda-hexatoxin-Hv1a (36 aa).

Intrachain disulfides connect Cys-3–Cys-17, Cys-10–Cys-22, Cys-13–Cys-14, and Cys-16–Cys-33.

This sequence belongs to the neurotoxin 11 (kappa toxin) family. In terms of tissue distribution, expressed by the venom gland.

It is found in the secreted. Functionally, this excitatory toxin inhibits insect calcium-activated potassium (KCa) channels (Slo-type). This is Lambda-hexatoxin-Hv1a from Hadronyche versuta (Blue mountains funnel-web spider).